The sequence spans 284 residues: Circadian clock oscillator protein KaiA (284 aa).

Positions 1-135 are psR domain, binds oxidized quinones; the sequence is MLSQIAICIW…LRLAPVETMA (135 aa). Residues 1–164 enclose the KaiA N-terminal domain; the sequence is MLSQIAICIW…DLAQRLQERL (164 aa). Positions 165 to 173 are flexible linker; that stretch reads GYLGVYYKR. The KaiA C-terminal domain occupies 174–282; the sequence is DPDRFLRNLP…CEMYRRSIPR (109 aa).

It belongs to the KaiA family. In terms of assembly, homodimer. The KaiABC complex composition changes during the circadian cycle to control KaiC phosphorylation. Complexes KaiC(6), KaiA(2-4):KaiC(6), KaiB(6):KaiC(6) and KaiC(6):KaiB(6):KaiA(12) are among the most important forms, many form cooperatively. The KaiA:KaiB complex is only found at 20-24 hours in the circadian cycle (subjective night). Binds to the C-terminal A-loop of KaiC via a coiled-coil structure. KaiA and CikA compete for binding to KaiB(fs). CikA copurifies with this protein in the clock complex. Interacts with LdpA.

Its activity is regulated as follows. Binding of oxidized quinones (produced as darkness falls) prevents KaiA from stimulating KaiC autophosphorylation. Its function is as follows. Key component of the KaiABC oscillator complex, which constitutes the main circadian regulator in cyanobacteria. Complex composition changes during the circadian cycle to control KaiC phosphorylation. KaiA stimulates KaiC autophosphorylation, while KaiB sequesters KaiA, leading to KaiC autodephosphorylation. KaiA binding to the KaiC CII domain during the subjective day yields KaiA(2-4):KaiC(6) complexes which stimulate KaiC autophosphorylation. A KaiA dimer is sufficient to enhance KaiC hexamer phosphorylation. Phospho-Ser-431 KaiC accumulation triggers binding of KaiB during the subjective night to form the KaiB(6):KaiC(6) complex, leading to changes in the output regulators CikA and SasA. KaiB(6):KaiC(6) formation exposes a site for KaiA binding on KaiB that sequesters KaiA from KaiC's CII domain, making the KaiC(6):KaiB(6):KaiA(12) complex resulting in KaiC autodephosphorylation. Complete dephosphorylation of KaiC leads to dissociation of KaiA(2):KaiB(1), completing 1 cycle of the Kai oscillator. In terms of biological role, circadian oscillations can be generated in vitro by incubating KaiA, KaiB and KaiC with 1 mM ATP. The cycle is self-sustainable for at least 3 cycles and resistant to temperature changes. A very robust clock is reconstituted with KaiA, KaiB, KaiC, SasA, CikA and RpaA; output is measured by transcription from an appropriate reporter. Functionally, kaiA binds oxidized quinones via its N-terminal PsR domain and is able to sense redox signals directly; quinone analog DBMIB (2,5-dibromo-3-methyl-6-isopropyl-p-benzoquinone) blocks KaiA stimulation of KaiC phosphorylation. The homodimer binds up to 8 quinones in the crystal structure, 3 in the PsR domain and 1 via the C-terminal helical bundle. Binding of oxidized quinone to the KaiA C-terminal domain reduces the phosphorylation of KaiC slightly; quinones may interact in a complex manner with KaiA to mediate clock input. The protein is Circadian clock oscillator protein KaiA of Synechococcus elongatus (strain ATCC 33912 / PCC 7942 / FACHB-805) (Anacystis nidulans R2).